We begin with the raw amino-acid sequence, 154 residues long: MHCPFCRHPDSRVIDSRETDEGQAIRRRRSCPECGRRFTTVETAVLAVVKRSGVTEPFSREKVISGVRRACQGRQVDDDALNLLAQQVEDSVRAAGSPEIPSHDVGLAILGPLRELDEVAYLRFASVYRSFSSADDFAREIEALRAHRNLSAHS.

Residues 3–34 (CPFCRHPDSRVIDSRETDEGQAIRRRRSCPEC) fold into a zinc finger. The ATP-cone domain maps to 46–136 (LAVVKRSGVT…VYRSFSSADD (91 aa)).

It belongs to the NrdR family. The cofactor is Zn(2+).

Negatively regulates transcription of bacterial ribonucleotide reductase nrd genes and operons by binding to NrdR-boxes. This chain is Transcriptional repressor NrdR, found in Mycobacterium bovis (strain ATCC BAA-935 / AF2122/97).